The primary structure comprises 324 residues: Putative arsenical pump-driving ATPase (324 aa).

ATP is bound at residue 21-28 (GKGGVGKT).

This sequence belongs to the arsA ATPase family.

It carries out the reaction arsenite(in) + ATP + H2O = arsenite(out) + ADP + phosphate + H(+). In terms of biological role, anion-transporting ATPase. Catalyzes the extrusion of arsenite. The sequence is that of Putative arsenical pump-driving ATPase from Methanothermobacter thermautotrophicus (strain ATCC 29096 / DSM 1053 / JCM 10044 / NBRC 100330 / Delta H) (Methanobacterium thermoautotrophicum).